A 308-amino-acid chain; its full sequence is MNVRGRVAPRRVTGRAMSTLLAYLALTKPRVIELLLVTAIPAMLLADRGAIHPLLMLNTLVGGMMAATGANTLNCVADADIDKVMKRTARRPLAREAVPTRNALALGLTLTVISFFWLWCATNLLAGVLALVTVAFYVFVYTLWLKRRTSQNVVWGGAAGCMPVMIGWSAITGTIAWPALAMFAIIFFWTPPHTWALAMRYKQDYQVAGVPMLPAVATERQVTKQILIYTWLTVAATLVLALATSWLYGAVALVAGGWFLTMAHQLYAGVRAGEPVRPLRLFLQSNNYLAVVFCALAVDSVIALPTLH.

Transmembrane regions (helical) follow at residues 20-40 (LLAYLALTKPRVIELLLVTAI), 50-70 (AIHPLLMLNTLVGGMMAATGA), 102-122 (NALALGLTLTVISFFWLWCAT), 124-144 (LLAGVLALVTVAFYVFVYTLW), 149-169 (TSQNVVWGGAAGCMPVMIGWS), 170-190 (AITGTIAWPALAMFAIIFFWT), 227-249 (LIYTWLTVAATLVLALATSWLYG), and 288-308 (YLAVVFCALAVDSVIALPTLH).

Belongs to the UbiA prenyltransferase family. Protoheme IX farnesyltransferase subfamily.

It is found in the cell membrane. It carries out the reaction heme b + (2E,6E)-farnesyl diphosphate + H2O = Fe(II)-heme o + diphosphate. It functions in the pathway porphyrin-containing compound metabolism; heme O biosynthesis; heme O from protoheme: step 1/1. Functionally, converts heme B (protoheme IX) to heme O by substitution of the vinyl group on carbon 2 of heme B porphyrin ring with a hydroxyethyl farnesyl side group. In Mycobacterium bovis (strain BCG / Pasteur 1173P2), this protein is Protoheme IX farnesyltransferase.